The primary structure comprises 309 residues: Probable 3-hydroxyacyl-CoA dehydrogenase B0272.3 (309 aa).

This sequence belongs to the 3-hydroxyacyl-CoA dehydrogenase family. Homodimer.

It is found in the mitochondrion matrix. It catalyses the reaction a (3S)-3-hydroxyacyl-CoA + NAD(+) = a 3-oxoacyl-CoA + NADH + H(+). The protein operates within lipid metabolism; fatty acid beta-oxidation. This is Probable 3-hydroxyacyl-CoA dehydrogenase B0272.3 from Caenorhabditis elegans.